Consider the following 1444-residue polypeptide: Protein shortage in chiasmata 1 ortholog (1444 aa).

The segment covering 1106–1117 (SITKSPQISSPQ) has biased composition (low complexity). Residues 1106–1129 (SITKSPQISSPQENRNQISTLSSQ) are disordered.

The protein belongs to the XPF family. Highly divergent. As to quaternary structure, interacts with TEX11. Interacts with SPO16.

It is found in the chromosome. Its function is as follows. ATPase required during meiosis for the formation of crossover recombination intermediates. Binds DNA: preferentially binds to single-stranded DNA and DNA branched structures. Does not show nuclease activity in vitro, but shows ATPase activity, which is stimulated by the presence of single-stranded DNA. Plays a key role in homologous recombination and crossing-over in meiotic prophase I in male and female germ cells. Required for proper synaptonemal complex assembly and homologous chromosome pairing. Requiref for recruitment TEX11 and MSH4 to recombination intermediates. This Homo sapiens (Human) protein is Protein shortage in chiasmata 1 ortholog.